A 109-amino-acid chain; its full sequence is Tetraspanin-31 (109 aa).

Residues 1 to 12 (MVCGGFACSKNA) are Cytoplasmic-facing. The helical transmembrane segment at 13–33 (LCALNVVYMLVGLLLIGVAAW) threads the bilayer. The Extracellular portion of the chain corresponds to 34–44 (AKGLGLVSSIH). A helical transmembrane segment spans residues 45-65 (IIGGVIAVGVFLLLIAVAGLV). Residues 66 to 72 (GAVNHHQ) lie on the Cytoplasmic side of the membrane. Residues 73–93 (VLLFFYMIILGLVFIFQFGIS) traverse the membrane as a helical segment. The Extracellular portion of the chain corresponds to 94 to 109 (CSCLAINLSKQAGIIN). Residue Asn100 is glycosylated (N-linked (GlcNAc...) asparagine).

It belongs to the tetraspanin (TM4SF) family.

Its subcellular location is the membrane. The chain is Tetraspanin-31 (TSPAN31) from Sus scrofa (Pig).